The following is a 196-amino-acid chain: Phosphatidyl-N-methylethanolamine N-methyltransferase (196 aa).

Residue methionine 1 is a topological domain, lumenal. Residues 2–28 (AIFEINNSFLICAVSIALNPLLWNIAA) constitute an intramembrane region (helical). Residues 29 to 40 (RSEYNHKTLTKL) are Lumenal-facing. The chain crosses the membrane as a helical span at residues 41-62 (ANGDSKKACYMLAACIFVAGIV). At 63 to 89 (RDLIYQNALKQQPTLGIFMNPLVQGIA) the chain is on the cytoplasmic side. A helical membrane pass occupies residues 90–110 (KLIFCFGSVLVLSSMYKLGLV). 94–96 (CFG) is a binding site for S-adenosyl-L-methionine. The Lumenal portion of the chain corresponds to 111–153 (GTYLGDYFGFLLPERVSGFPFNVNDNPMYNGSTLCFLSTALRY). A helical membrane pass occupies residues 154 to 174 (GKVAGLLLTLEVFFVYRIALK). The Cytoplasmic portion of the chain corresponds to 175 to 196 (FEEPFTAKIYAARDSKQAKKSE). 176-177 (EE) contributes to the S-adenosyl-L-methionine binding site.

This sequence belongs to the class VI-like SAM-binding methyltransferase superfamily. PEMT/PEM2 methyltransferase family.

It is found in the endoplasmic reticulum membrane. Its subcellular location is the mitochondrion membrane. It catalyses the reaction a 1,2-diacyl-sn-glycero-3-phospho-N-methylethanolamine + S-adenosyl-L-methionine = a 1,2-diacyl-sn-glycero-3-phospho-N,N-dimethylethanolamine + S-adenosyl-L-homocysteine + H(+). It carries out the reaction a 1,2-diacyl-sn-glycero-3-phospho-N,N-dimethylethanolamine + S-adenosyl-L-methionine = a 1,2-diacyl-sn-glycero-3-phosphocholine + S-adenosyl-L-homocysteine + H(+). It functions in the pathway phospholipid metabolism; phosphatidylcholine biosynthesis. Its function is as follows. Catalyzes the second two steps of the methylation pathway of phosphatidylcholine biosynthesis, the SAM-dependent methylation of phosphatidylmonomethylethanolamine (PMME) to phosphatidyldimethylethanolamine (PDME) and of PDME to phosphatidylcholine (PC). The polypeptide is Phosphatidyl-N-methylethanolamine N-methyltransferase (Schizosaccharomyces pombe (strain 972 / ATCC 24843) (Fission yeast)).